Reading from the N-terminus, the 177-residue chain is ATP synthase subunit delta (177 aa).

The protein belongs to the ATPase delta chain family. As to quaternary structure, F-type ATPases have 2 components, F(1) - the catalytic core - and F(0) - the membrane proton channel. F(1) has five subunits: alpha(3), beta(3), gamma(1), delta(1), epsilon(1). F(0) has three main subunits: a(1), b(2) and c(10-14). The alpha and beta chains form an alternating ring which encloses part of the gamma chain. F(1) is attached to F(0) by a central stalk formed by the gamma and epsilon chains, while a peripheral stalk is formed by the delta and b chains.

The protein localises to the cell inner membrane. Its function is as follows. F(1)F(0) ATP synthase produces ATP from ADP in the presence of a proton or sodium gradient. F-type ATPases consist of two structural domains, F(1) containing the extramembraneous catalytic core and F(0) containing the membrane proton channel, linked together by a central stalk and a peripheral stalk. During catalysis, ATP synthesis in the catalytic domain of F(1) is coupled via a rotary mechanism of the central stalk subunits to proton translocation. Functionally, this protein is part of the stalk that links CF(0) to CF(1). It either transmits conformational changes from CF(0) to CF(1) or is implicated in proton conduction. The sequence is that of ATP synthase subunit delta from Shigella dysenteriae serotype 1 (strain Sd197).